The chain runs to 570 residues: Peptidyl-prolyl cis-trans isomerase-like 2 (570 aa).

One can recognise a U-box domain in the interval 37-110; that stretch reads KRLPFNFCSL…GDYVDPVTYK (74 aa). 3 disordered regions span residues 215–253, 428–449, and 469–570; these read RSERAQRADSSAVTKKADGSTTTSTQSKTASFQSGKPTP, STTLNNLETHPVNSSTNRPTPD, and KKAE…SSWD. Residues 234–248 are compositionally biased toward low complexity; the sequence is STTTSTQSKTASFQS. Positions 298-457 constitute a PPIase cyclophilin-type domain; it reads QKGYARISTT…PDIRITDVTI (160 aa). Positions 428-446 are enriched in polar residues; sequence STTLNNLETHPVNSSTNRP. Positions 469-483 are enriched in basic and acidic residues; that stretch reads KKAEEASGKNKKVDP. 2 stretches are compositionally biased toward acidic residues: residues 484–497 and 535–550; these read TEEDRETQQEDDDQ and QEEDEIVEFVDEEPEP.

The protein belongs to the cyclophilin-type PPIase family. PPIL2 subfamily.

Its subcellular location is the nucleus. It catalyses the reaction [protein]-peptidylproline (omega=180) = [protein]-peptidylproline (omega=0). It carries out the reaction S-ubiquitinyl-[E2 ubiquitin-conjugating enzyme]-L-cysteine + [acceptor protein]-L-lysine = [E2 ubiquitin-conjugating enzyme]-L-cysteine + N(6)-ubiquitinyl-[acceptor protein]-L-lysine.. May catalyze the cis-trans isomerization of proline imidic peptide bonds in oligopeptides thereby assisting the folding of proteins. May also function as a chaperone, playing a role in intracellular transport of proteins. May also have a protein ubiquitin ligase activity acting as an E3 ubiquitin protein ligase or as a ubiquitin-ubiquitin ligase promoting elongation of ubiquitin chains on proteins. The chain is Peptidyl-prolyl cis-trans isomerase-like 2 (cyp8) from Aspergillus oryzae (strain ATCC 42149 / RIB 40) (Yellow koji mold).